Consider the following 894-residue polypeptide: Protein NLP9 (894 aa).

Residues 517–603 (QEISGARRLE…LDSVQGVEGG (87 aa)) form the RWP-RK domain. Residues 578-598 (RKINKVNRSLRKIQTVLDSVQ) adopt a coiled-coil conformation. Residues 732–763 (NTRIERGNGTVEPNHSISSSMSDSSNSSGAVL) form a disordered region. A compositionally biased stretch (low complexity) spans 747–763 (SISSSMSDSSNSSGAVL). The region spanning 792-875 (TLTVKATYRE…HTVKFLVRDI (84 aa)) is the PB1 domain.

It localises to the nucleus. Functionally, probable transcription factor. This chain is Protein NLP9 (NLP9), found in Arabidopsis thaliana (Mouse-ear cress).